A 255-amino-acid polypeptide reads, in one-letter code: Adenosylcobinamide-GDP ribazoletransferase (255 aa).

6 consecutive transmembrane segments (helical) span residues 43–63 (LVGTLLGLLCVLVYAFASLFF), 64–84 (PYQVAIVLMMAFSLLLTGAFH), 113–133 (IGTYGSATLTMALIGKFVFLT), 141–161 (FGLMIVVAYTLSRAVAATLIY), 195–215 (LAAISLGLGVGLLLILFAILF), and 234–254 (CLGGAQQLMELGIYLVLIAVV).

This sequence belongs to the CobS family. The cofactor is Mg(2+).

It is found in the cell inner membrane. The enzyme catalyses alpha-ribazole + adenosylcob(III)inamide-GDP = adenosylcob(III)alamin + GMP + H(+). It carries out the reaction alpha-ribazole 5'-phosphate + adenosylcob(III)inamide-GDP = adenosylcob(III)alamin 5'-phosphate + GMP + H(+). It functions in the pathway cofactor biosynthesis; adenosylcobalamin biosynthesis; adenosylcobalamin from cob(II)yrinate a,c-diamide: step 7/7. Joins adenosylcobinamide-GDP and alpha-ribazole to generate adenosylcobalamin (Ado-cobalamin). Also synthesizes adenosylcobalamin 5'-phosphate from adenosylcobinamide-GDP and alpha-ribazole 5'-phosphate. The sequence is that of Adenosylcobinamide-GDP ribazoletransferase from Vibrio vulnificus (strain CMCP6).